A 1362-amino-acid polypeptide reads, in one-letter code: DNA-directed RNA polymerase subunit beta'' (1362 aa).

Zn(2+)-binding residues include C224, C295, C302, and C305.

The protein belongs to the RNA polymerase beta' chain family. RpoC2 subfamily. In plastids the minimal PEP RNA polymerase catalytic core is composed of four subunits: alpha, beta, beta', and beta''. When a (nuclear-encoded) sigma factor is associated with the core the holoenzyme is formed, which can initiate transcription. Zn(2+) serves as cofactor.

It localises to the plastid. It is found in the chloroplast. It carries out the reaction RNA(n) + a ribonucleoside 5'-triphosphate = RNA(n+1) + diphosphate. DNA-dependent RNA polymerase catalyzes the transcription of DNA into RNA using the four ribonucleoside triphosphates as substrates. The sequence is that of DNA-directed RNA polymerase subunit beta'' from Helianthus annuus (Common sunflower).